Reading from the N-terminus, the 90-residue chain is Probable oxaloacetate decarboxylase gamma chain 2 (90 aa).

The helical transmembrane segment at 10 to 32 threads the bilayer; sequence GINLLTLGMGFVFIFLIFLVYAT.

This sequence belongs to the OadG family. Heterotrimer of an alpha, a beta and a gamma subunit. Requires Na(+) as cofactor.

The protein resides in the cell membrane. The enzyme catalyses oxaloacetate + 2 Na(+)(in) + H(+) = pyruvate + 2 Na(+)(out) + CO2. Its function is as follows. Catalyzes the decarboxylation of oxaloacetate coupled to Na(+) translocation. The protein is Probable oxaloacetate decarboxylase gamma chain 2 (oadG2) of Vibrio cholerae serotype O1 (strain ATCC 39315 / El Tor Inaba N16961).